A 538-amino-acid chain; its full sequence is Putative cysteine ligase BshC (538 aa).

Positions 248-268 (ISKYKEVQEGLRNQQEVIKEL) form a coiled coil.

This sequence belongs to the BshC family.

In terms of biological role, involved in bacillithiol (BSH) biosynthesis. May catalyze the last step of the pathway, the addition of cysteine to glucosamine malate (GlcN-Mal) to generate BSH. The protein is Putative cysteine ligase BshC of Bacillus cereus (strain ATCC 14579 / DSM 31 / CCUG 7414 / JCM 2152 / NBRC 15305 / NCIMB 9373 / NCTC 2599 / NRRL B-3711).